We begin with the raw amino-acid sequence, 312 residues long: L-type lectin-like domain-containing protein C126.08c (312 aa).

Positions 1 to 22 (MFFSVKNVFLLGIFGFVLGALA) are cleaved as a signal peptide. Residues 23 to 280 (ETSHLERLSL…QKKGSFKKRL (258 aa)) lie on the Extracellular side of the membrane. The L-type lectin-like domain occupies 24–248 (TSHLERLSLE…EIASILSRTI (225 aa)). Residues 281 to 301 (IILLLSLIVIFSIFALRSYQV) traverse the membrane as a helical segment. The Cytoplasmic portion of the chain corresponds to 302-312 (QQEKNRRTTVL).

Its subcellular location is the membrane. The protein localises to the endoplasmic reticulum. It localises to the golgi apparatus. It is found in the vacuole. The polypeptide is L-type lectin-like domain-containing protein C126.08c (Schizosaccharomyces pombe (strain 972 / ATCC 24843) (Fission yeast)).